The following is a 282-amino-acid chain: Hydroxyacylglutathione hydrolase-like protein (282 aa).

Residues His54, His56, Asp58, His59, His110, Asp134, and His173 each contribute to the Zn(2+) site.

The protein belongs to the metallo-beta-lactamase superfamily. Glyoxalase II family. Zn(2+) is required as a cofactor.

Hydrolase acting on ester bonds. This Gallus gallus (Chicken) protein is Hydroxyacylglutathione hydrolase-like protein (HAGHL).